We begin with the raw amino-acid sequence, 242 residues long: MLTRKIKLWDINAHITCRLCNGYLIDATTVTECLHTFCRSCLVKYLEENNTCPTCRIVIHQSHPLQYIGHDRTMQDIVYKLVPGLQEAEMRKQREFYHKLGMEVPGDIKAEILTVKQHVEAHRNGETKTDEHTHKEPPEEKQEEDHDYHRSDEQVSICLECNSSKLRGLKRKWIRCSAQATVLHLKKFIAKKLNLSSFNELDILCNEEILGKDHTLKFVVVTRWRFKKAPLLLHYRPKMDLL.

The segment at 17 to 56 adopts an RING-type zinc-finger fold; sequence CRLCNGYLIDATTVTECLHTFCRSCLVKYLEENNTCPTCR. The tract at residues 120-149 is disordered; the sequence is EAHRNGETKTDEHTHKEPPEEKQEEDHDYH.

Component of a PRC1-like complex.

The protein localises to the nucleus. Its function is as follows. Component of a Polycomb group (PcG) multiprotein PRC1-like complex, a complex class required to maintain the transcriptionally repressive state of many genes, including Hox genes, throughout development. PcG PRC1 complex acts via chromatin remodeling and modification of histones; it mediates monoubiquitination of histone H2A 'Lys-119', rendering chromatin heritably changed in its expressibility. Within the PRC1-like complex, regulates RNF2 ubiquitin ligase activity. This chain is Polycomb group RING finger protein 3 (pcgf3), found in Xenopus tropicalis (Western clawed frog).